The primary structure comprises 289 residues: 4-diphosphocytidyl-2-C-methyl-D-erythritol kinase (289 aa).

Residue Lys-11 is part of the active site. 93 to 103 (PLAAGLAGGSA) contributes to the ATP binding site. The active site involves Asp-135.

This sequence belongs to the GHMP kinase family. IspE subfamily.

The enzyme catalyses 4-CDP-2-C-methyl-D-erythritol + ATP = 4-CDP-2-C-methyl-D-erythritol 2-phosphate + ADP + H(+). Its pathway is isoprenoid biosynthesis; isopentenyl diphosphate biosynthesis via DXP pathway; isopentenyl diphosphate from 1-deoxy-D-xylulose 5-phosphate: step 3/6. Catalyzes the phosphorylation of the position 2 hydroxy group of 4-diphosphocytidyl-2C-methyl-D-erythritol. The chain is 4-diphosphocytidyl-2-C-methyl-D-erythritol kinase from Thermoanaerobacter sp. (strain X514).